Consider the following 221-residue polypeptide: Deoxyribose-phosphate aldolase (221 aa).

The active-site Proton donor/acceptor is the D90. The active-site Schiff-base intermediate with acetaldehyde is K152. K181 (proton donor/acceptor) is an active-site residue.

It belongs to the DeoC/FbaB aldolase family. DeoC type 1 subfamily.

It localises to the cytoplasm. The catalysed reaction is 2-deoxy-D-ribose 5-phosphate = D-glyceraldehyde 3-phosphate + acetaldehyde. It participates in carbohydrate degradation; 2-deoxy-D-ribose 1-phosphate degradation; D-glyceraldehyde 3-phosphate and acetaldehyde from 2-deoxy-alpha-D-ribose 1-phosphate: step 2/2. In terms of biological role, catalyzes a reversible aldol reaction between acetaldehyde and D-glyceraldehyde 3-phosphate to generate 2-deoxy-D-ribose 5-phosphate. This is Deoxyribose-phosphate aldolase from Exiguobacterium sp. (strain ATCC BAA-1283 / AT1b).